We begin with the raw amino-acid sequence, 83 residues long: Cytochrome b559 subunit alpha (83 aa).

Residues 21 to 35 (VIHSITIPSLFIAGW) form a helical membrane-spanning segment. Position 23 (histidine 23) interacts with heme.

This sequence belongs to the PsbE/PsbF family. As to quaternary structure, heterodimer of an alpha subunit and a beta subunit. PSII is composed of 1 copy each of membrane proteins PsbA, PsbB, PsbC, PsbD, PsbE, PsbF, PsbH, PsbI, PsbJ, PsbK, PsbL, PsbM, PsbT, PsbX, PsbY, PsbZ, Psb30/Ycf12, at least 3 peripheral proteins of the oxygen-evolving complex and a large number of cofactors. It forms dimeric complexes. Heme b is required as a cofactor.

Its subcellular location is the plastid. The protein resides in the chloroplast thylakoid membrane. Its function is as follows. This b-type cytochrome is tightly associated with the reaction center of photosystem II (PSII). PSII is a light-driven water:plastoquinone oxidoreductase that uses light energy to abstract electrons from H(2)O, generating O(2) and a proton gradient subsequently used for ATP formation. It consists of a core antenna complex that captures photons, and an electron transfer chain that converts photonic excitation into a charge separation. This Tupiella akineta (Green alga) protein is Cytochrome b559 subunit alpha.